Reading from the N-terminus, the 898-residue chain is Protein argonaute 1 (898 aa).

The segment at 1–52 (MLALNAGSQYPGRGRGRGRGDGGNRVHKHDGINRYHGGFRGGRGGGGGGFRD) is disordered. The segment covering 18–33 (GRGDGGNRVHKHDGIN) has biased composition (basic and acidic residues). Over residues 38–50 (GFRGGRGGGGGGF) the composition is skewed to gly residues. Residues 283–378 (KCSDEMRRLR…IFADRTKMSR (96 aa)) form the PAZ domain. Residues 542–883 (FAMVKLRTKE…YARKYGSLKS (342 aa)) form the Piwi domain.

Belongs to the argonaute family.

Its subcellular location is the cytoplasm. In terms of biological role, involved in RNA-mediated gene silencing (RNAi) of mobile elements and repeats including retroposons SLACS (Spliced Leader Associated Conserved Sequence), TATE (Telomere-Associated Transposable Element) and TAS-like sequences (Telomere Associated Sequence), and a family of 74-nucleotide long tandem repeats, CIR74. Predominantly binds to siRNAs derived from SLACS and TATE transposable elements and to a lesser extent to siRNAs from TAS-like and CIR74 elements. The sequence is that of Protein argonaute 1 from Leishmania braziliensis.